The chain runs to 160 residues: Arginine repressor (160 aa).

The protein belongs to the ArgR family.

The protein resides in the cytoplasm. It participates in amino-acid biosynthesis; L-arginine biosynthesis [regulation]. In terms of biological role, regulates arginine biosynthesis genes. The protein is Arginine repressor of Anaeromyxobacter sp. (strain K).